Consider the following 245-residue polypeptide: MIIPALDLIEGQVVRLFQGDYGQVTEYKVDPAEQFNLYHQAGANWLHLVDLTGAKDTTARQLDLIARLLASTPANIQIGGGVRNEADVQDLLNAGAQRVVVGSTAVKQPELVKGWMEKYGAEKIVLALDINIDENGTRNVAISGWQEDSGVTIEALLEDYLTVGLKHVLCTDISRDGTLQGSNVELYVDLCKQYPQVQFQSSGGIGSLDDIAALKGSGVAGVIVGRALLDGKFTAEEAFQCWQSE.

Residue Asp7 is the Proton acceptor of the active site. Asp129 (proton donor) is an active-site residue.

This sequence belongs to the HisA/HisF family.

It is found in the cytoplasm. The enzyme catalyses 1-(5-phospho-beta-D-ribosyl)-5-[(5-phospho-beta-D-ribosylamino)methylideneamino]imidazole-4-carboxamide = 5-[(5-phospho-1-deoxy-D-ribulos-1-ylimino)methylamino]-1-(5-phospho-beta-D-ribosyl)imidazole-4-carboxamide. It functions in the pathway amino-acid biosynthesis; L-histidine biosynthesis; L-histidine from 5-phospho-alpha-D-ribose 1-diphosphate: step 4/9. In Aliivibrio fischeri (strain MJ11) (Vibrio fischeri), this protein is 1-(5-phosphoribosyl)-5-[(5-phosphoribosylamino)methylideneamino] imidazole-4-carboxamide isomerase.